We begin with the raw amino-acid sequence, 437 residues long: MGDSNSSQEAYSDTTSTNASRIADQNQLNLNVDLEKNQTVRKSGSLEALQNAKIHVPKHSDGSPLDYPKLNTYTFVPTTVPPYVLEAQFDKLRLQDKGTVDGNVTDDKNLPKEFKWGQFASTIGCHSAYTRDQNYNPSHKSYDGYSLSSSTSSKNAALREILGDMCSEWGGEERLEGVLHSEIGANLEFNTTEERKEWLQYIEKVKDFYYGDNKKNPESPESVHNKVYKSDWVNELNKEREKWRRLKQRKLQQWRPPLTSLLLDNQYLILGLRIFTGILSCISLALAIKIFQNSRSNNTISESKIGQQPSTIMAICVNAVAIAYIIYIAHDEFAGKPVGLRNPLSKLKLILLDLLFIIFSSANLALAFNTRFDKEWVCTSIRRSNGSTYGYPKIPRICRKQEALSAFLFVALFMWVITFSISIVRVVEKVSSITNRN.

The disordered stretch occupies residues 1-24; that stretch reads MGDSNSSQEAYSDTTSTNASRIAD. Residues 1 to 267 are Cytoplasmic-facing; sequence MGDSNSSQEA…LTSLLLDNQY (267 aa). A phosphoserine mark is found at S45 and S167. Residues 268–288 traverse the membrane as a helical segment; that stretch reads LILGLRIFTGILSCISLALAI. Topologically, residues 289–308 are extracellular; that stretch reads KIFQNSRSNNTISESKIGQQ. Residue N297 is glycosylated (N-linked (GlcNAc...) asparagine). A helical transmembrane segment spans residues 309-329; the sequence is PSTIMAICVNAVAIAYIIYIA. The Cytoplasmic segment spans residues 330 to 348; the sequence is HDEFAGKPVGLRNPLSKLK. A helical membrane pass occupies residues 349-369; that stretch reads LILLDLLFIIFSSANLALAFN. Residues 370-403 are Extracellular-facing; it reads TRFDKEWVCTSIRRSNGSTYGYPKIPRICRKQEA. N-linked (GlcNAc...) asparagine glycosylation occurs at N385. A helical transmembrane segment spans residues 404-424; sequence LSAFLFVALFMWVITFSISIV. At 425 to 437 the chain is on the cytoplasmic side; the sequence is RVVEKVSSITNRN.

In terms of assembly, interacts with SPO14.

Its subcellular location is the membrane. Its function is as follows. Regulator of phospholipase D (SPO14) which is required for SPO14 catalytic activity in mitotic cells. Essential to buffer the toxic effects of C16:0 platelet activating factor. The chain is Regulator of phospholipase D SRF1 (SRF1) from Saccharomyces cerevisiae (strain ATCC 204508 / S288c) (Baker's yeast).